Reading from the N-terminus, the 108-residue chain is UPF0102 protein Sfri_0388 (108 aa).

Belongs to the UPF0102 family.

This is UPF0102 protein Sfri_0388 from Shewanella frigidimarina (strain NCIMB 400).